A 549-amino-acid polypeptide reads, in one-letter code: uncharacterized protein (549 aa).

12 helical membrane passes run Met-1–Thr-21, Ile-28–Leu-48, Val-50–Gly-70, Ile-85–Tyr-105, Trp-106–Thr-126, Phe-165–Phe-185, Lys-187–Leu-207, Ile-222–Ser-242, Leu-278–Leu-298, Asn-310–Val-330, Ile-361–Ile-381, and Val-398–Ile-418.

Belongs to the monovalent cation:proton antiporter 1 (CPA1) transporter (TC 2.A.36) family.

It is found in the cell inner membrane. This is an uncharacterized protein from Escherichia coli (strain K12).